A 172-amino-acid chain; its full sequence is MPGIVELPTLEELKVDEVKISSAVLKAAAHHYGAQCDKPNKEFMLCRWEEKDPRRCLEEGKLVNKCALDFFRQIKRHCAEPFTEYWTCIDYTGQQLFRHCRKQQAKFDECVLDKLGWVRPDLGELSKVTKVKTDRPLPENPYHSRPRPDPSPEIEGDLQPATHGSRFYFWTK.

CHCH domains are found at residues 33–74 (GAQC…FRQI) and 75–118 (KRHC…LGWV). 4 short sequence motifs (cx9C motif) span residues 36–46 (CDKPNKEFMLC), 56–66 (CLEEGKLVNKC), 78–88 (CAEPFTEYWTC), and 100–110 (CRKQQAKFDEC). 4 disulfides stabilise this stretch: Cys36/Cys66, Cys46/Cys56, Cys78/Cys110, and Cys88/Cys100. Positions 133 to 164 (TDRPLPENPYHSRPRPDPSPEIEGDLQPATHG) are disordered.

The protein belongs to the complex I NDUFA8 subunit family. As to quaternary structure, complex I is composed of 45 different subunits. May contain intrachain disulfide bonds, as evidenced by its electrophoretic mobility under reducing vs non-reducing conditions.

It localises to the mitochondrion inner membrane. It is found in the mitochondrion intermembrane space. Its subcellular location is the mitochondrion. Accessory subunit of the mitochondrial membrane respiratory chain NADH dehydrogenase (Complex I), that is believed not to be involved in catalysis. Complex I functions in the transfer of electrons from NADH to the respiratory chain. The immediate electron acceptor for the enzyme is believed to be ubiquinone. This is NADH dehydrogenase [ubiquinone] 1 alpha subcomplex subunit 8 (NDUFA8) from Homo sapiens (Human).